Here is a 215-residue protein sequence, read N- to C-terminus: Orotate phosphoribosyltransferase (215 aa).

K26 provides a ligand contact to 5-phospho-alpha-D-ribose 1-diphosphate. 34–35 (FF) contacts orotate. 5-phospho-alpha-D-ribose 1-diphosphate is bound by residues 72–73 (YK), R99, K100, K103, H105, and 124–132 (DDVITAGTA). 2 residues coordinate orotate: T128 and R156.

The protein belongs to the purine/pyrimidine phosphoribosyltransferase family. PyrE subfamily. As to quaternary structure, homodimer. Mg(2+) is required as a cofactor.

The catalysed reaction is orotidine 5'-phosphate + diphosphate = orotate + 5-phospho-alpha-D-ribose 1-diphosphate. It participates in pyrimidine metabolism; UMP biosynthesis via de novo pathway; UMP from orotate: step 1/2. Functionally, catalyzes the transfer of a ribosyl phosphate group from 5-phosphoribose 1-diphosphate to orotate, leading to the formation of orotidine monophosphate (OMP). The sequence is that of Orotate phosphoribosyltransferase from Stutzerimonas stutzeri (strain A1501) (Pseudomonas stutzeri).